We begin with the raw amino-acid sequence, 339 residues long: Glycerol-3-phosphate dehydrogenase [NAD(P)+] (339 aa).

Residues S15, Y16, H36, and K110 each contribute to the NADPH site. Sn-glycerol 3-phosphate contacts are provided by K110, G139, and T141. Residue A143 participates in NADPH binding. Residues K195, D248, S258, R259, and N260 each coordinate sn-glycerol 3-phosphate. K195 serves as the catalytic Proton acceptor. R259 lines the NADPH pocket. 2 residues coordinate NADPH: V283 and E285.

This sequence belongs to the NAD-dependent glycerol-3-phosphate dehydrogenase family.

It localises to the cytoplasm. It catalyses the reaction sn-glycerol 3-phosphate + NAD(+) = dihydroxyacetone phosphate + NADH + H(+). It carries out the reaction sn-glycerol 3-phosphate + NADP(+) = dihydroxyacetone phosphate + NADPH + H(+). Its pathway is membrane lipid metabolism; glycerophospholipid metabolism. Its function is as follows. Catalyzes the reduction of the glycolytic intermediate dihydroxyacetone phosphate (DHAP) to sn-glycerol 3-phosphate (G3P), the key precursor for phospholipid synthesis. This is Glycerol-3-phosphate dehydrogenase [NAD(P)+] from Salmonella agona (strain SL483).